The chain runs to 407 residues: Formamidase (407 aa).

As to quaternary structure, homotrimer.

It carries out the reaction formamide + H2O = formate + NH4(+). Its function is as follows. Hydrolyzes formamide with the production of ammonia which can be used as a source of nitrogen for growth. Also acts, more slowly, on acetamide, propanamide and butanamide. The protein is Formamidase (fmdA) of Methylophilus methylotrophus (Bacterium W3A1).